Reading from the N-terminus, the 22-residue chain is Ocellatin-LB1 (22 aa).

Methionine 22 carries the post-translational modification Methionine amide.

Expressed by the skin glands.

The protein localises to the secreted. In terms of biological role, antibacterial peptide that inhibits Gram-negative bacteria A.actinomycetemcomitans ATCC 29522 (MIC=222.37 uM) and E.coli ATCC 25922 (MIC=114.04 uM). Also has antifungal activity against C.albicans ATCC 18804 (MIC=233.55 uM) and C.lusitaniae ATCC 56936 (MIC=233.55 uM). No activity against the Gram-positive bacterium S.aureus ATCC 25923. Shows virtually no hemolytic activity towards rabbit erythrocytes. This is Ocellatin-LB1 from Leptodactylus labyrinthicus (Labyrinth frog).